Here is a 315-residue protein sequence, read N- to C-terminus: MVTWMLPAGLVASAVVAASSANLGPGFDSIGLALSLCDEIVVETTDSGLVVVVDGEGADQVPMGPEHLVVRAVRRGLQAVGVSAAGLVVRCRNAIPHSRGLGSSAAAVVGGLAVVNGFVAQIDSTPLSNAQLIQLASEFEGHPDNAAAAVLGGAVVSWVDRSYDQPDYCAVPLRLHPDIHLFAAIPEERSSTAESRVLLPARVSHDDARFNVSRAALLVVALTERPDLLMAATEDVLHQPHRASAMSASAEYLRLLRRHNVAATLSGAGPSLIALSTQSELPREAAEYGAANGFIIIKMTAGDEVCWRPEVTVPG.

96–106 serves as a coordination point for ATP; the sequence is PHSRGLGSSAA.

The protein belongs to the GHMP kinase family. Homoserine kinase subfamily.

It is found in the cytoplasm. The catalysed reaction is L-homoserine + ATP = O-phospho-L-homoserine + ADP + H(+). Its pathway is amino-acid biosynthesis; L-threonine biosynthesis; L-threonine from L-aspartate: step 4/5. Catalyzes the ATP-dependent phosphorylation of L-homoserine to L-homoserine phosphate. This is Homoserine kinase from Mycobacterium leprae (strain Br4923).